Here is a 576-residue protein sequence, read N- to C-terminus: MAGUK p55 subfamily member 7 (576 aa).

L27 domains follow at residues 10–65 (SDTG…KQSP) and 67–122 (PILH…YDPV). A PDZ domain is found at 139–220 (IIRLVKNREP…AITFKIIPGS (82 aa)). In terms of domain architecture, SH3 spans 228-298 (EGKMFIKALF…PSKHFQERRL (71 aa)). Positions 289–383 (PSKHFQERRL…VGPVGVGLNE (95 aa)) are phospho-regulated basic and hydrophobic (PRBH) motif. The 193-residue stretch at 368–560 (YRLVVLVGPV…AFNELKTTFD (193 aa)) folds into the Guanylate kinase-like domain. Position 409 is a phosphoserine (Ser-409).

Belongs to the MAGUK family. Heterodimer; able to heterodimerize via its C-terminal L27 domain with LIN7A, LIN7B and LIN7C. Forms a tripartite complex composed of DLG1, MPP7 and LIN7 (LIN7A or LIN7C). Interacts with DLG1 via its N-terminal L27 domain. Interacts with PALS1 and PATJ. Phosphorylated by aPKC which promotes dissociation from the cell cortex.

It localises to the membrane. It is found in the lateral cell membrane. The protein resides in the cell junction. The protein localises to the tight junction. Its subcellular location is the adherens junction. It localises to the cytoplasm. It is found in the cell cortex. Functionally, acts as an important adapter that promotes epithelial cell polarity and tight junction formation via its interaction with DLG1. Involved in the assembly of protein complexes at sites of cell-cell contact. This chain is MAGUK p55 subfamily member 7 (MPP7), found in Homo sapiens (Human).